Here is a 574-residue protein sequence, read N- to C-terminus: K(+)/H(+) antiporter NhaP2 (574 aa).

The next 13 membrane-spanning stretches (helical) occupy residues 6–26 (INSF…LSPV), 34–54 (ILLI…GGIL), 58–78 (YSTA…DGGM), 87–107 (VALW…TSIT), 109–129 (VMAA…GAIV), 173–193 (IAIL…ISFI), 196–216 (FGLG…LVNL), 219–239 (LAEG…YAAS), 242–262 (LGGS…NKPT), 271–291 (VLDG…GLLL), 299–319 (IWLP…PLAV), 335–355 (WFIS…VFPM), and 359–379 (LPGA…SLLV). In terms of domain architecture, RCK C-terminal spans 405-486 (SGVEIYPSSE…LEALSNLFSQ (82 aa)).

This sequence belongs to the monovalent cation:proton antiporter 1 (CPA1) transporter (TC 2.A.36) family. NhaP2 subfamily.

It is found in the cell inner membrane. The catalysed reaction is K(+)(in) + H(+)(out) = K(+)(out) + H(+)(in). K(+)/H(+) antiporter that extrudes potassium in exchange for external protons and maintains the internal concentration of potassium under toxic levels. In Shewanella sp. (strain ANA-3), this protein is K(+)/H(+) antiporter NhaP2.